The following is a 314-amino-acid chain: Dihydroorotate dehydrogenase (fumarate) (314 aa).

Residues lysine 46, 70–74, and asparagine 130 contribute to the substrate site; that span reads NSMGL. Position 46–47 (46–47) interacts with FMN; that stretch reads KS. Asparagine 130 lines the FMN pocket. Catalysis depends on nucleophile residues serine 132 and cysteine 133. 2 residues coordinate FMN: lysine 167 and isoleucine 195. 196 to 197 lines the substrate pocket; the sequence is NS. FMN is bound by residues glycine 224, 252–253, and 274–275; these read GG and GT.

Belongs to the dihydroorotate dehydrogenase family. Type 1 subfamily. As to quaternary structure, homodimer. Requires FMN as cofactor.

Its subcellular location is the cytoplasm. It catalyses the reaction (S)-dihydroorotate + fumarate = orotate + succinate. Its pathway is pyrimidine metabolism; UMP biosynthesis via de novo pathway. Catalyzes the conversion of dihydroorotate to orotate with fumarate as the electron acceptor. The chain is Dihydroorotate dehydrogenase (fumarate) (URA1) from Saccharomyces paradoxus (Yeast).